We begin with the raw amino-acid sequence, 878 residues long: Phosphoenolpyruvate carboxylase (878 aa).

Catalysis depends on residues histidine 138 and lysine 545.

The protein belongs to the PEPCase type 1 family. Mg(2+) serves as cofactor.

It carries out the reaction oxaloacetate + phosphate = phosphoenolpyruvate + hydrogencarbonate. Its function is as follows. Forms oxaloacetate, a four-carbon dicarboxylic acid source for the tricarboxylic acid cycle. The chain is Phosphoenolpyruvate carboxylase from Shewanella sediminis (strain HAW-EB3).